A 540-amino-acid chain; its full sequence is Probable ATP-dependent RNA helicase DDX28 (540 aa).

Residues 3–18 (LAGPSRLLALAVRLLL) carry the Mitochondrial targeting signal motif. Residues 126–156 (GSFVDLGLEPRVLLALQEAVPEVVQPTSVQS) carry the Q motif motif. Residues 159-351 (IPPLLRGRHL…SKVTSPDSLT (193 aa)) enclose the Helicase ATP-binding domain. 172–179 (AETGSGKT) serves as a coordination point for ATP. The Nuclear export signal signature appears at 180–191 (LSYLLPLFQRLL). A DEAD motif is present at residues 286–289 (DEVD). The Helicase C-terminal domain occupies 377–536 (KVTELVQILK…GLASSVGDPL (160 aa)). Positions 520-523 (RRRR) match the Nuclear localization signal motif.

The protein belongs to the DEAD box helicase family. As to quaternary structure, monomer. Found in a complex with GRSF1, DHX30, FASTKD2 and FASTKD5. Associates with the 16S mitochondrial rRNA (16S mt-rRNA) and with the mitochondrial ribosome large subunit (39S).

It localises to the nucleus. Its subcellular location is the mitochondrion. The protein localises to the mitochondrion matrix. It is found in the mitochondrion nucleoid. The catalysed reaction is ATP + H2O = ADP + phosphate + H(+). Functionally, plays an essential role in facilitating the proper assembly of the mitochondrial large ribosomal subunit and its helicase activity is essential for this function. May be involved in RNA processing or transport. Has RNA and Mg(2+)-dependent ATPase activity. The protein is Probable ATP-dependent RNA helicase DDX28 (Ddx28) of Mus musculus (Mouse).